The following is a 240-amino-acid chain: Putative tyrosine phosphatase 067L (240 aa).

The Tyrosine-protein phosphatase domain maps to 3-151 (QASFFVADKA…EREWPLNPTQ (149 aa)). Cysteine 96 serves as the catalytic Phosphocysteine intermediate.

Belongs to the protein-tyrosine phosphatase family.

It catalyses the reaction O-phospho-L-tyrosyl-[protein] + H2O = L-tyrosyl-[protein] + phosphate. The polypeptide is Putative tyrosine phosphatase 067L (Aedes vexans (Inland floodwater mosquito)).